Here is a 220-residue protein sequence, read N- to C-terminus: Tumor protein D54 (220 aa).

Met-1 carries the post-translational modification N-acetylmethionine. Phosphoserine is present on residues Ser-3, Ser-12, and Ser-19. Positions Gly-40–Gly-82 form a coiled coil. 4 positions are modified to phosphoserine: Ser-96, Ser-149, Ser-168, and Ser-175. Phosphothreonine is present on Thr-177. Ser-180 is modified (phosphoserine). The residue at position 187 (Thr-187) is a Phosphothreonine. The tract at residues Lys-189–Phe-220 is disordered. A phosphoserine mark is found at Ser-206 and Ser-209.

This sequence belongs to the TPD52 family. Forms a homodimer or heterodimer with other members of the family. Interacts with MAL2.

This is Tumor protein D54 (Tpd52l2) from Mus musculus (Mouse).